The chain runs to 210 residues: Dynactin-associated protein (210 aa).

Topologically, residues 1–113 (MVADIKGNEQ…YCRNDWSMWK (113 aa)) are cytoplasmic. The helical; Signal-anchor for type II membrane protein transmembrane segment at 114–134 (VFLACLLACVIMTAIGVLIIC) threads the bilayer. Topologically, residues 135–210 (LVNNKGSANS…PITVAPTDHL (76 aa)) are extracellular. The tract at residues 168–210 (ACPPTMTTTSTVPASTATESTTSTATAATTSTEPITVAPTDHL) is disordered. A compositionally biased stretch (low complexity) spans 171–203 (PTMTTTSTVPASTATESTTSTATAATTSTEPIT).

In terms of assembly, interacts with DCTN1 and DCTN2. In terms of tissue distribution, expressed in fibroblast and numerous cancer cell lines (at protein level).

The protein localises to the golgi apparatus membrane. The protein resides in the cell membrane. Functionally, plays a role in the regulation of cell proliferation. Promotes activation of the AKT1 signaling pathway. Promotes phosphorylation of AKT1 at 'Ser-473'. The polypeptide is Dynactin-associated protein (DYNAP) (Homo sapiens (Human)).